Reading from the N-terminus, the 127-residue chain is Protein translocase subunit SecE (127 aa).

3 helical membrane-spanning segments follow: residues 16-36 (IAKWSFLGILIILFILSNHYY), 42-62 (IFQNILLTSLTILSTGLIFLT), and 98-118 (IIVTILLALILWGLDNILIWF).

It belongs to the SecE/SEC61-gamma family. Component of the Sec protein translocase complex. Heterotrimer consisting of SecY, SecE and SecG subunits. The heterotrimers can form oligomers, although 1 heterotrimer is thought to be able to translocate proteins. Interacts with the ribosome. Interacts with SecDF, and other proteins may be involved. Interacts with SecA.

The protein resides in the cell membrane. Its function is as follows. Essential subunit of the Sec protein translocation channel SecYEG. Clamps together the 2 halves of SecY. May contact the channel plug during translocation. This Buchnera aphidicola subsp. Baizongia pistaciae (strain Bp) protein is Protein translocase subunit SecE.